A 1009-amino-acid chain; its full sequence is DNA polymerase catalytic subunit (1009 aa).

This sequence belongs to the DNA polymerase type-B family.

It localises to the host nucleus. The enzyme catalyses DNA(n) + a 2'-deoxyribonucleoside 5'-triphosphate = DNA(n+1) + diphosphate. The polypeptide is DNA polymerase catalytic subunit (9) (Saimiri sciureus (Common squirrel monkey)).